The primary structure comprises 181 residues: UPF0397 protein SUB0313 (181 aa).

A run of 5 helical transmembrane segments spans residues 11–31 (AIGI…ITIF), 45–65 (LFSV…GHML), 69–89 (FAGY…GLGI), 114–134 (VQAL…DILI), and 147–167 (LFAA…LLIA).

This sequence belongs to the UPF0397 family.

It localises to the cell membrane. This chain is UPF0397 protein SUB0313, found in Streptococcus uberis (strain ATCC BAA-854 / 0140J).